The sequence spans 1428 residues: DNA topoisomerase 2 (1428 aa).

Residues Asn70, Asn99, 127–129, and 140–147 contribute to the ATP site; these read SSN and GRNGYGAK. Residues 333–336 form an interaction with DNA region; sequence KKKK. Residue 365–367 coordinates ATP; the sequence is QTK. One can recognise a Toprim domain in the interval 443-557; it reads CTLVLTEGDS…GLLDIQGFLL (115 aa). The Mg(2+) site is built by Glu449, Asp526, and Asp528. The Topo IIA-type catalytic domain occupies 692-1159; sequence IPNVLDGFKP…SAKDIWNTDL (468 aa). Residue Tyr782 is the O-(5'-phospho-DNA)-tyrosine intermediate of the active site. Residues 965 to 974 are interaction with DNA; sequence KLISPISLMN. Disordered stretches follow at residues 1083–1102, 1176–1217, 1240–1288, and 1303–1428; these read KGATSDEEDEESSHEDTENV, ARGG…RKGK, KAPT…ELSK, and MGST…NEED. Thr1086 is subject to Phosphothreonine; by CK2. Phosphoserine; by CK2 is present on Ser1087. The segment covering 1207 to 1217 has biased composition (basic residues); sequence KNKKSTARKGK. Ser1252 bears the Phosphoserine mark. Residue Thr1258 is modified to Phosphothreonine; by CK2. Residues Ser1266, Ser1269, and Ser1272 each carry the phosphoserine; by CK2 modification. The segment covering 1275-1286 has biased composition (basic and acidic residues); that stretch reads DIKKEDKDEGEL. Over residues 1332–1347 the composition is skewed to basic residues; it reads TAVKPKLAKKPVRKQQ. Residues Ser1353, Ser1356, Ser1408, and Ser1423 each carry the phosphoserine; by CK2 modification. Residues 1403-1428 show a composition bias toward acidic residues; sequence ELSDDSFIEDDEEENQGSDVSFNEED.

The protein belongs to the type II topoisomerase family. In terms of assembly, homodimer. Mg(2+) serves as cofactor. Mn(2+) is required as a cofactor. Requires Ca(2+) as cofactor. Phosphorylation enhances the activity. Stimulates decatenation activity.

It is found in the nucleus. The enzyme catalyses ATP-dependent breakage, passage and rejoining of double-stranded DNA.. Its function is as follows. Control of topological states of DNA by transient breakage and subsequent rejoining of DNA strands. Topoisomerase II makes double-strand breaks. Essential during mitosis and meiosis for proper segregation of daughter chromosomes. The sequence is that of DNA topoisomerase 2 (TOP2) from Saccharomyces cerevisiae (strain ATCC 204508 / S288c) (Baker's yeast).